The sequence spans 238 residues: RNA-free ribonuclease P (238 aa).

The protein belongs to the HARP family.

It catalyses the reaction Endonucleolytic cleavage of RNA, removing 5'-extranucleotides from tRNA precursor.. In terms of biological role, RNA-free RNase P that catalyzes the removal of the 5'-leader sequence from pre-tRNA to produce the mature 5'-terminus. The polypeptide is RNA-free ribonuclease P (Hyperthermus butylicus (strain DSM 5456 / JCM 9403 / PLM1-5)).